We begin with the raw amino-acid sequence, 329 residues long: Glycerol-3-phosphate dehydrogenase [NAD(P)+] (329 aa).

Residues Trp11, Arg30, and Lys103 each contribute to the NADPH site. Positions 103, 132, and 134 each coordinate sn-glycerol 3-phosphate. Ala136 lines the NADPH pocket. Residues Lys187, Asp240, Ser250, Arg251, and Asn252 each contribute to the sn-glycerol 3-phosphate site. Lys187 acts as the Proton acceptor in catalysis. Position 251 (Arg251) interacts with NADPH. NADPH is bound by residues Val275 and Glu277.

This sequence belongs to the NAD-dependent glycerol-3-phosphate dehydrogenase family.

The protein resides in the cytoplasm. It catalyses the reaction sn-glycerol 3-phosphate + NAD(+) = dihydroxyacetone phosphate + NADH + H(+). It carries out the reaction sn-glycerol 3-phosphate + NADP(+) = dihydroxyacetone phosphate + NADPH + H(+). The protein operates within membrane lipid metabolism; glycerophospholipid metabolism. Its function is as follows. Catalyzes the reduction of the glycolytic intermediate dihydroxyacetone phosphate (DHAP) to sn-glycerol 3-phosphate (G3P), the key precursor for phospholipid synthesis. The polypeptide is Glycerol-3-phosphate dehydrogenase [NAD(P)+] (Nitrosomonas europaea (strain ATCC 19718 / CIP 103999 / KCTC 2705 / NBRC 14298)).